The sequence spans 237 residues: Large ribosomal subunit protein bL25 (237 aa).

The tract at residues 1 to 104 (MELTAKPRTP…SVPVHTTGRS (104 aa)) is N-terminal domain. A middle domain region spans residues 105–189 (QGEVQGGLVD…ELEAEVQAAQ (85 aa)). Residues 190 to 237 (VAGLVAAGELSEEAAEAVLEGDASLEEVKAEASEDNAGTDSEDNSDAQ) form a C-terminal domain region. Positions 205-237 (EAVLEGDASLEEVKAEASEDNAGTDSEDNSDAQ) are disordered.

The protein belongs to the bacterial ribosomal protein bL25 family. CTC subfamily. Part of the 50S ribosomal subunit. Contacts proteins L11 and L16, the A site tRNA, and the 5S and 23S rRNAs.

Functionally, this is one of 3 proteins that mediate the attachment of the 5S rRNA onto the large ribosomal subunit. This protein has three domains. The N-terminal one is bound on the solvent face, the middle domain fills the space between the 5S rRNA and the L11 arm contacting the 23S rRNA while the C-terminal domain is on the edge of the intersubunit interface and contacts the A site. The protein conformation changes upon binding of a tRNA mimic to the A site, although the mimic does not interact directly with CTC itself, consistent with CTCs presumed role in moderating A site binding. The chain is Large ribosomal subunit protein bL25 (rplY) from Deinococcus radiodurans (strain ATCC 13939 / DSM 20539 / JCM 16871 / CCUG 27074 / LMG 4051 / NBRC 15346 / NCIMB 9279 / VKM B-1422 / R1).